Consider the following 469-residue polypeptide: Glutamine synthetase (469 aa).

The GS beta-grasp domain occupies 16 to 100; sequence EGVQYVDLRF…MICDIYDPVT (85 aa). Residues 108 to 469 form the GS catalytic domain; that stretch reads TRYIAQKAEQ…PKEFELYWDI (362 aa). Mg(2+)-binding residues include Glu133 and Glu135. Glu207 serves as a coordination point for ATP. Mg(2+) contacts are provided by Glu212 and Glu220. L-glutamate-binding positions include 264–265 and Gly265; that span reads NG. Position 269 (His269) interacts with Mg(2+). ATP contacts are provided by residues 271–273 and Ser273; that span reads HFS. Residues Arg321, Glu327, and Arg339 each contribute to the L-glutamate site. Residues Arg339, Arg344, and Lys353 each coordinate ATP. Glu358 lines the Mg(2+) pocket. Arg360 contacts L-glutamate. Tyr398 is subject to O-AMP-tyrosine.

Belongs to the glutamine synthetase family. As to quaternary structure, oligomer of 12 subunits arranged in the form of two hexagons. The cofactor is Mg(2+).

It is found in the cytoplasm. The catalysed reaction is L-glutamate + NH4(+) + ATP = L-glutamine + ADP + phosphate + H(+). Its activity is regulated as follows. The activity of this enzyme could be controlled by adenylation under conditions of abundant glutamine. Its function is as follows. Catalyzes the ATP-dependent biosynthesis of glutamine from glutamate and ammonia. The protein is Glutamine synthetase of Aquifex aeolicus (strain VF5).